The primary structure comprises 333 residues: GTPase Obg (333 aa).

Positions 4 to 162 constitute an Obg domain; sequence GNFVDYVKIY…MDVILELKVL (159 aa). In terms of domain architecture, OBG-type G spans 163-332; it reads ADVGLVGFPN…LKDKLWKMLN (170 aa). Residues 169-176, 194-198, 216-219, 283-286, and 313-315 each bind GTP; these read GFPNAGKS, FTTLK, DIPG, SKCD, and SSV. The Mg(2+) site is built by Ser-176 and Thr-196.

Belongs to the TRAFAC class OBG-HflX-like GTPase superfamily. OBG GTPase family. Monomer. Mg(2+) serves as cofactor.

Its subcellular location is the cytoplasm. In terms of biological role, an essential GTPase which binds GTP, GDP and possibly (p)ppGpp with moderate affinity, with high nucleotide exchange rates and a fairly low GTP hydrolysis rate. Plays a role in control of the cell cycle, stress response, ribosome biogenesis and in those bacteria that undergo differentiation, in morphogenesis control. In Flavobacterium johnsoniae (strain ATCC 17061 / DSM 2064 / JCM 8514 / BCRC 14874 / CCUG 350202 / NBRC 14942 / NCIMB 11054 / UW101) (Cytophaga johnsonae), this protein is GTPase Obg.